The chain runs to 324 residues: Biotin synthase (324 aa).

The Radical SAM core domain maps to 42–269; the sequence is NEVQISSLLN…KSYIRLAAGR (228 aa). [4Fe-4S] cluster-binding residues include C57, C61, and C64. Residues C101, C132, C192, and R264 each coordinate [2Fe-2S] cluster.

This sequence belongs to the radical SAM superfamily. Biotin synthase family. Homodimer. Requires [4Fe-4S] cluster as cofactor. [2Fe-2S] cluster serves as cofactor.

The catalysed reaction is (4R,5S)-dethiobiotin + (sulfur carrier)-SH + 2 reduced [2Fe-2S]-[ferredoxin] + 2 S-adenosyl-L-methionine = (sulfur carrier)-H + biotin + 2 5'-deoxyadenosine + 2 L-methionine + 2 oxidized [2Fe-2S]-[ferredoxin]. It participates in cofactor biosynthesis; biotin biosynthesis; biotin from 7,8-diaminononanoate: step 2/2. Catalyzes the conversion of dethiobiotin (DTB) to biotin by the insertion of a sulfur atom into dethiobiotin via a radical-based mechanism. This chain is Biotin synthase, found in Ehrlichia canis (strain Jake).